A 308-amino-acid chain; its full sequence is Protein translocase subunit SecF (308 aa).

The next 6 helical transmembrane spans lie at 23-42 (VSYS…IGIY), 140-160 (IEAG…YIGV), 164-184 (WYFG…ALGF), 194-214 (LSTI…SVVI), 246-266 (ILTV…GGKA), and 272-292 (VLVF…SAPI).

Belongs to the SecD/SecF family. SecF subfamily. Forms a complex with SecD. Part of the essential Sec protein translocation apparatus which comprises SecA, SecYEG and auxiliary proteins SecDF-YajC and YidC.

The protein resides in the cell inner membrane. Part of the Sec protein translocase complex. Interacts with the SecYEG preprotein conducting channel. SecDF uses the proton motive force (PMF) to complete protein translocation after the ATP-dependent function of SecA. The sequence is that of Protein translocase subunit SecF from Rickettsia typhi (strain ATCC VR-144 / Wilmington).